The chain runs to 248 residues: Ribonuclease PH (248 aa).

Residues Arg86 and 124-126 (GTR) contribute to the phosphate site.

This sequence belongs to the RNase PH family. As to quaternary structure, homohexameric ring arranged as a trimer of dimers.

The enzyme catalyses tRNA(n+1) + phosphate = tRNA(n) + a ribonucleoside 5'-diphosphate. In terms of biological role, phosphorolytic 3'-5' exoribonuclease that plays an important role in tRNA 3'-end maturation. Removes nucleotide residues following the 3'-CCA terminus of tRNAs; can also add nucleotides to the ends of RNA molecules by using nucleoside diphosphates as substrates, but this may not be physiologically important. Probably plays a role in initiation of 16S rRNA degradation (leading to ribosome degradation) during starvation. The chain is Ribonuclease PH from Clostridium perfringens (strain ATCC 13124 / DSM 756 / JCM 1290 / NCIMB 6125 / NCTC 8237 / Type A).